The primary structure comprises 706 residues: Polyribonucleotide nucleotidyltransferase (706 aa).

Asp490 and Asp496 together coordinate Mg(2+). The region spanning 556–615 (PRIETMQIPTDKIREVIGSGGKVIREIVEVSGAKVDINDEGIIKIASPNGDSIQKAYDMI) is the KH domain. Residues 625 to 693 (GKIYKGKVVK…DRGKVRLAMK (69 aa)) form the S1 motif domain.

This sequence belongs to the polyribonucleotide nucleotidyltransferase family. Mg(2+) is required as a cofactor.

It localises to the cytoplasm. It catalyses the reaction RNA(n+1) + phosphate = RNA(n) + a ribonucleoside 5'-diphosphate. Its function is as follows. Involved in mRNA degradation. Catalyzes the phosphorolysis of single-stranded polyribonucleotides processively in the 3'- to 5'-direction. The protein is Polyribonucleotide nucleotidyltransferase of Jannaschia sp. (strain CCS1).